Here is a 345-residue protein sequence, read N- to C-terminus: Probable velvet family sexual development regulator LACBIDRAFT_317102 (345 aa).

2 stretches are compositionally biased toward polar residues: residues 1–13 (MFTT…SYRS) and 24–38 (EIQN…NPPR). 3 disordered regions span residues 1 to 43 (MFTT…TRRR), 138 to 189 (ESWT…SPSS), and 310 to 345 (RKRR…SDED). Residues 62 to 306 (GQTIRAELDE…ARWGVRLNIR (245 aa)) enclose the Velvet domain. Composition is skewed to low complexity over residues 141–158 (TSRS…PTLS) and 167–184 (SSPQ…ASTP). Over residues 336-345 (SEDDEASDED) the composition is skewed to acidic residues.

It belongs to the velvet family.

Its subcellular location is the nucleus. Velvet-domain-containing protein that probably acts as a positive regulator of sexual development. The polypeptide is Probable velvet family sexual development regulator LACBIDRAFT_317102 (Laccaria bicolor (strain S238N-H82 / ATCC MYA-4686) (Bicoloured deceiver)).